Consider the following 407-residue polypeptide: Immunoglobulin superfamily member 5 (407 aa).

Over 1 to 266 the chain is Extracellular; that stretch reads MGQKERSTAD…LGFSLPTWGK (266 aa). 2 consecutive Ig-like V-type domains span residues 39-139 and 142-231; these read NEVI…LTVQ and GELF…ATVN. 4 N-linked (GlcNAc...) asparagine glycosylation sites follow: asparagine 59, asparagine 103, asparagine 210, and asparagine 231. 2 disulfide bridges follow: cysteine 60/cysteine 123 and cysteine 163/cysteine 215. The chain crosses the membrane as a helical span at residues 267–285; the sequence is VGLGLAGTMLLTPTCTLTI. Residues 286-407 are Cytoplasmic-facing; it reads RCCCCRRRCC…PEKVSNTTVV (122 aa). A compositionally biased stretch (basic and acidic residues) spans 320-331; the sequence is KSEKEKTNKETE. The tract at residues 320–407 is disordered; it reads KSEKEKTNKE…PEKVSNTTVV (88 aa). Residues 389–407 are compositionally biased toward polar residues; it reads PQASFNLASPEKVSNTTVV.

The protein belongs to the immunoglobulin superfamily. In terms of assembly, interacts with MAGI1 at tight junctions, forms a tripartite complex with NPHS1. Interacts with LNX1 isoform 2 via its PDZ 2 domain, it may also interact with other isoforms containing this domain.

It is found in the apical cell membrane. The protein resides in the cell junction. The protein localises to the tight junction. Functionally, provides, together with MAGI1, an adhesion machinery at tight junctions, which may regulate the permeability of kidney glomerulus and small intestinal epithelial cells. Mediates calcium-independent homophilic cell adhesion. In testis, it may function as a cell adhesion molecule rather than a tight-junction protein. It may participate in the adhesion between spermatogonia-spermatogonia, spermatogonia-Sertoli cells, and Sertoli cells-Sertoli cells. In Homo sapiens (Human), this protein is Immunoglobulin superfamily member 5 (IGSF5).